A 204-amino-acid polypeptide reads, in one-letter code: Transcription initiation factor TFIID subunit 11b (204 aa).

Residues 38 to 60 (PFEAAMEEQEESPVETEQTLEGD) form a disordered region. Over residues 42-58 (AMEEQEESPVETEQTLE) the composition is skewed to acidic residues. Residues 106-195 (FTEEQMSRYE…RRLKLQGKVP (90 aa)) form the Histone-fold domain.

It belongs to the TAF11 family. As to quaternary structure, component of the TFIID complex. TFIID is composed of TATA binding protein (TBP) and a number of TBP-associated factors (TAFs) whose MWs range from 14-217 kDa. Expressed in roots, leaves and inflorescences.

The protein resides in the nucleus. Functionally, TAFs are components of the transcription factor IID (TFIID) complex that is essential for mediating regulation of RNA polymerase transcription. The protein is Transcription initiation factor TFIID subunit 11b (TAF11B) of Arabidopsis thaliana (Mouse-ear cress).